We begin with the raw amino-acid sequence, 129 residues long: MARKQVSRKRRVKKNIENGVAHIRSTFNNTIVTITDEFGNALSWSSAGALGFKGSKKSTPFAAQMASETASKSAMEHGLKTVEVTVKGPGPGRESAIRALQSAGLEVTAIRDVTPVPHNGCRPPKRRRV.

It belongs to the universal ribosomal protein uS11 family. Part of the 30S ribosomal subunit. Interacts with proteins S7 and S18. Binds to IF-3.

Its function is as follows. Located on the platform of the 30S subunit, it bridges several disparate RNA helices of the 16S rRNA. Forms part of the Shine-Dalgarno cleft in the 70S ribosome. The polypeptide is Small ribosomal subunit protein uS11 (Staphylococcus haemolyticus (strain JCSC1435)).